We begin with the raw amino-acid sequence, 313 residues long: Acetaldehyde dehydrogenase (313 aa).

NAD(+) is bound at residue Ser-12–Ile-15. Residue Cys-132 is the Acyl-thioester intermediate of the active site. Residues Ser-163 to Asn-171 and Asn-291 contribute to the NAD(+) site.

The protein belongs to the acetaldehyde dehydrogenase family.

The enzyme catalyses acetaldehyde + NAD(+) + CoA = acetyl-CoA + NADH + H(+). The chain is Acetaldehyde dehydrogenase (bphG) from Burkholderia cepacia (Pseudomonas cepacia).